The sequence spans 140 residues: Large ribosomal subunit protein bL17 (140 aa).

It belongs to the bacterial ribosomal protein bL17 family. Part of the 50S ribosomal subunit. Contacts protein L32.

This chain is Large ribosomal subunit protein bL17, found in Rhizobium etli (strain CIAT 652).